The following is a 158-amino-acid chain: GAF domain-containing protein A (158 aa).

The 127-residue stretch at 32–158 (NQIANLANVT…LTQILKLLDN (127 aa)) folds into the GAF domain.

It belongs to the free Met sulfoxide reductase family.

This is GAF domain-containing protein A (gafA) from Dictyostelium discoideum (Social amoeba).